Here is a 366-residue protein sequence, read N- to C-terminus: MIRTEEMLLNVGPQHPSTHGVFRLVIKIDGEIIKEATPVIGYLHRGTEKIAESLQYTQIIPYTDRMDYLSAMTNNYVICHAVETMMGLEIPERAEYLRVLAMELGRIASHLVWWGTNLLDIGAVSPFLYAFREREMIINLLNELCGARLTFNYMRVGGVKWDAPDGWIEKVKEFVPYMREQLAGYHDLVSGNEIFLNRVKGVGIYSAEEAISYSLSGANLRCTGVNWDLRKDEPYSIYDRFDFDIPVGSVGDAWDRYVCRMQEIEESLKIVEQAVQQFPKEGAVLAKVPKIIKAPKGEAFVRIESPRGEIGCYIASDGKKEPYRLKFRRPSFYNLQILPKLLKGENIANLITILGGVDIVLGEVDG.

Belongs to the complex I 49 kDa subunit family. NDH-1 is composed of 14 different subunits. Subunits NuoB, C, D, E, F, and G constitute the peripheral sector of the complex.

The protein resides in the cell membrane. The catalysed reaction is a quinone + NADH + 5 H(+)(in) = a quinol + NAD(+) + 4 H(+)(out). Functionally, NDH-1 shuttles electrons from NADH, via FMN and iron-sulfur (Fe-S) centers, to quinones in the respiratory chain. The immediate electron acceptor for the enzyme in this species is believed to be a menaquinone. Couples the redox reaction to proton translocation (for every two electrons transferred, four hydrogen ions are translocated across the cytoplasmic membrane), and thus conserves the redox energy in a proton gradient. This Bacillus anthracis protein is NADH-quinone oxidoreductase subunit D.